The primary structure comprises 200 residues: Probable molybdenum cofactor guanylyltransferase (200 aa).

Residues 9 to 11, Lys-21, Asp-69, and Asp-100 contribute to the GTP site; that span reads LAG. Asp-100 contributes to the Mg(2+) binding site.

Belongs to the MobA family. The cofactor is Mg(2+).

It is found in the cytoplasm. It carries out the reaction Mo-molybdopterin + GTP + H(+) = Mo-molybdopterin guanine dinucleotide + diphosphate. In terms of biological role, transfers a GMP moiety from GTP to Mo-molybdopterin (Mo-MPT) cofactor (Moco or molybdenum cofactor) to form Mo-molybdopterin guanine dinucleotide (Mo-MGD) cofactor. This Bacillus cereus (strain ZK / E33L) protein is Probable molybdenum cofactor guanylyltransferase.